Consider the following 329-residue polypeptide: Beta-ketoacyl-[acyl-carrier-protein] synthase III (329 aa).

Catalysis depends on residues Cys-114 and His-255. Residues 256–260 are ACP-binding; sequence QANQR. Asn-285 is a catalytic residue.

The protein belongs to the thiolase-like superfamily. FabH family. Homodimer.

It is found in the cytoplasm. The enzyme catalyses malonyl-[ACP] + acetyl-CoA + H(+) = 3-oxobutanoyl-[ACP] + CO2 + CoA. Its pathway is lipid metabolism; fatty acid biosynthesis. Its function is as follows. Catalyzes the condensation reaction of fatty acid synthesis by the addition to an acyl acceptor of two carbons from malonyl-ACP. Catalyzes the first condensation reaction which initiates fatty acid synthesis and may therefore play a role in governing the total rate of fatty acid production. Possesses both acetoacetyl-ACP synthase and acetyl transacylase activities. Its substrate specificity determines the biosynthesis of branched-chain and/or straight-chain of fatty acids. The protein is Beta-ketoacyl-[acyl-carrier-protein] synthase III of Trichodesmium erythraeum (strain IMS101).